The following is a 735-amino-acid chain: Disintegrin and metalloproteinase domain-containing protein 2 (735 aa).

The first 16 residues, Met1–Met16, serve as a signal peptide directing secretion. The propeptide occupies Asp17–Lys174. Residues Asp17–Arg686 lie on the Extracellular side of the membrane. Residues Asn76, Asn122, and Asn220 are each glycosylated (N-linked (GlcNAc...) asparagine). The Peptidase M12B domain maps to Lys178–Pro375. 4 cysteine pairs are disulfide-bonded: Cys287–Cys370, Cys329–Cys354, Cys331–Cys336, and Cys445–Cys465. Residues Asn353, Asn459, and Asn566 are each glycosylated (N-linked (GlcNAc...) asparagine). A Disintegrin domain is found at Gln384–Thr473. The region spanning Leu612–Ser645 is the EGF-like domain. 3 disulfide bridges follow: Cys616–Cys627, Cys621–Cys633, and Cys635–Cys644. A helical transmembrane segment spans residues Trp687–Val707. The Cytoplasmic portion of the chain corresponds to Lys708–Gly735. Phosphoserine is present on Ser729.

In terms of assembly, heterodimer with ADAM1/fertilin subunit alpha. In terms of processing, the signal and the metalloprotease domain are cleaved during the epididymal maturation of the spermatozoa. In terms of tissue distribution, expressed specifically in testis.

The protein resides in the membrane. Sperm surface membrane protein that may be involved in sperm-egg plasma membrane adhesion and fusion during fertilization. Could have a direct role in sperm-zona binding or migration of sperm from the uterus into the oviduct. Interactions with egg membrane could be mediated via binding between its disintegrin-like domain to one or more integrins receptors on the egg. This is a non catalytic metalloprotease-like protein. This chain is Disintegrin and metalloproteinase domain-containing protein 2 (ADAM2), found in Macaca fascicularis (Crab-eating macaque).